The primary structure comprises 734 residues: Ribosomal biogenesis protein LAS1L (734 aa).

The segment at 204-255 (EGIEEEDQEEDKNIVVDDITEQKPEPQDDGKSTESDVKADGDSKGSEEVDSH) is disordered. The segment covering 214-255 (DKNIVVDDITEQKPEPQDDGKSTESDVKADGDSKGSEEVDSH) has biased composition (basic and acidic residues). Glycyl lysine isopeptide (Lys-Gly) (interchain with G-Cter in SUMO2) cross-links involve residues Lys215 and Lys226. Ser441, Ser523, and Ser560 each carry phosphoserine. Residues 547–561 (GSEAKAQQQEEQGSV) are compositionally biased toward polar residues. The segment at 547 to 619 (GSEAKAQQQE…PFSTGQESPT (73 aa)) is disordered. Residues 563–575 (DVKEEEKEEKEVL) are compositionally biased toward basic and acidic residues. Acidic residues predominate over residues 578 to 605 (QVEEEEENDDQEEEEEDEDDEDDEEEDR). The residue at position 617 (Ser617) is a Phosphoserine. Residues 636-655 (SAWQVSSEDVRWDTFPLGRM) are interaction with NOL9.

This sequence belongs to the LAS1 family. Component of some MLL1/MLL complex, at least composed of the core components KMT2A/MLL1, ASH2L, HCFC1/HCF1, WDR5 and RBBP5, as well as the facultative components BACC1, CHD8, E2F6, HSP70, INO80C, KANSL1, LAS1L, MAX, MCRS1, MGA, KAT8/MOF, PELP1, PHF20, PRP31, RING2, RUVB1/TIP49A, RUVB2/TIP49B, SENP3, TAF1, TAF4, TAF6, TAF7, TAF9 and TEX10. Component of the 5FMC complex, at least composed of PELP1, LAS1L, TEX10, WDR18 and SENP3; the complex interacts with methylated CHTOP and ZNF148. Interacts with NOL9 to form an ITS2 pre-rRNA endonuclease-kinase complex.

It localises to the nucleus. The protein resides in the nucleolus. Its subcellular location is the nucleoplasm. The protein localises to the cytoplasm. In terms of biological role, required for the synthesis of the 60S ribosomal subunit and maturation of the 28S rRNA. Functions as a component of the Five Friends of Methylated CHTOP (5FMC) complex; the 5FMC complex is recruited to ZNF148 by methylated CHTOP, leading to desumoylation of ZNF148 and subsequent transactivation of ZNF148 target genes. Required for the efficient pre-rRNA processing at both ends of internal transcribed spacer 2 (ITS2). In Homo sapiens (Human), this protein is Ribosomal biogenesis protein LAS1L (LAS1L).